The sequence spans 155 residues: Conopressin/neurophysin (155 aa).

An N-terminal signal peptide occupies residues 1 to 26; that stretch reads MMSSLCGMPLTYLLTAAVLSLSLTDA. The cysteines at positions 27 and 32 are disulfide-linked. Gly-35 carries the post-translational modification Glycine amide. 7 disulfide bridges follow: Cys-50–Cys-94, Cys-53–Cys-67, Cys-61–Cys-84, Cys-68–Cys-74, Cys-101–Cys-115, Cys-109–Cys-127, and Cys-116–Cys-121. The N-linked (GlcNAc...) asparagine glycan is linked to Asn-88.

The protein belongs to the vasopressin/oxytocin family. Seven disulfide bonds are present in neurophysin.

It localises to the secreted. This Lymnaea stagnalis (Great pond snail) protein is Conopressin/neurophysin.